The primary structure comprises 285 residues: tRNA uridine(34) hydroxylase (285 aa).

Residues 130 to 225 enclose the Rhodanese domain; it reads RGDDVVFFDG…YGEAFGDTGL (96 aa). Cysteine 185 functions as the Cysteine persulfide intermediate in the catalytic mechanism.

It belongs to the TrhO family.

It carries out the reaction uridine(34) in tRNA + AH2 + O2 = 5-hydroxyuridine(34) in tRNA + A + H2O. In terms of biological role, catalyzes oxygen-dependent 5-hydroxyuridine (ho5U) modification at position 34 in tRNAs. The polypeptide is tRNA uridine(34) hydroxylase (Rhodococcus opacus (strain B4)).